A 504-amino-acid chain; its full sequence is Maturase K (504 aa).

The protein belongs to the intron maturase 2 family. MatK subfamily.

Its subcellular location is the plastid. The protein localises to the chloroplast. Functionally, usually encoded in the trnK tRNA gene intron. Probably assists in splicing its own and other chloroplast group II introns. The sequence is that of Maturase K from Aruncus dioicus (Goat's beard).